A 432-amino-acid polypeptide reads, in one-letter code: Homogentisate 1,2-dioxygenase (432 aa).

Residue H286 is the Proton acceptor of the active site. Fe cation contacts are provided by H329 and E335. Y344 and H365 together coordinate homogentisate. H365 lines the Fe cation pocket.

This sequence belongs to the homogentisate dioxygenase family. Hexamer; dimer of trimers. Requires Fe cation as cofactor.

The enzyme catalyses homogentisate + O2 = 4-maleylacetoacetate + H(+). It participates in amino-acid degradation; L-phenylalanine degradation; acetoacetate and fumarate from L-phenylalanine: step 4/6. Involved in the catabolism of homogentisate (2,5-dihydroxyphenylacetate or 2,5-OH-PhAc), a central intermediate in the degradation of phenylalanine and tyrosine. Catalyzes the oxidative ring cleavage of the aromatic ring of homogentisate to yield maleylacetoacetate. The sequence is that of Homogentisate 1,2-dioxygenase from Bordetella petrii (strain ATCC BAA-461 / DSM 12804 / CCUG 43448).